Consider the following 473-residue polypeptide: MSENFKVLIIGGSVAGLTLALCLEKLDISYEILEQGEDISPQVGASIGIMPNGSPVLDQLGVFDDVERVIEPLEFARIRYPDGFFFQSQYPAIIADHFGYPISFLERQKFLQILYSKIRYKERVHTGQKAVRIESHESHVVVRTADKQYSGHLVVGADGVHSIVRSEIWRLSEPGAITDEEKTALRVEYACVYGISSGVRGVTDGVQLSLLDHGVTIHVFNGKAGKVFWFVIIKIDKRYSYTDMPRFSTQDAREICESLKSKLLDTSVSFGDLWAKCDIFMMTPLEEGHFQTWHRGRLVCVGDAVRKLTPNIGQGANMAIEDIAVLANALFRANVRDGLPDDRQIDDVLSQLSATRLPATKTTCKQSEFLTRLQAGDGIWRRLAARYIFPALHDIPAASSARVLKGGQRLDFVDPPQRARPELDRWAWVKDLRGYVPRPHVLYLICGALLAWWASGLVWHFPSKLDTTILSHV.

An N-terminal signal peptide occupies residues 1–22 (MSENFKVLIIGGSVAGLTLALC). The FAD site is built by glutamate 34, glycine 48, arginine 107, aspartate 303, and alanine 316. Residues 441-461 (VLYLICGALLAWWASGLVWHF) form a helical membrane-spanning segment.

It belongs to the paxM FAD-dependent monooxygenase family. It depends on FAD as a cofactor.

The protein localises to the membrane. It functions in the pathway secondary metabolite biosynthesis. Functionally, FAD-dependent monooxygeanse; part of the gene cluster that mediates the biosynthesis of terpendoles, indole-diterpene (IDT) mycotoxins including terpendole I, terpendole K, terpendole C, as well as the kinesin Eg5 inhibitor terpendole E. Terpendoles biosynthesis begins with the synthesis of geranylgeranyl diphosphate (GGPP) by a yet unidentified GGPP synthase. Condensation of indole-3-glycerol phosphate with GGPP by the prenyltransferase terC then forms 3-geranylgeranylindole (3-GGI), followed by epoxidation and cyclization of this intermediate (by the FAD-dependent monooxygeanse terM and the terpene cyclase terB) to form paspaline. The cytochrome monooxygenase terQ then hydroxylates paspalline at C-11 to yield terpendole E. The cytochrome monooxygenase terP converts terpendole E to 13-desoxyterpendole I, and terQ converts 13-desoxyterpendole I into terpendole I. TerF and terK are required for conversion of terpendole I to terpendole C which is further converted to terpendole K. The polypeptide is FAD-dependent monooxygeanse terM (Tolypocladium album (Soil fungus)).